Consider the following 477-residue polypeptide: Cytoplasmic 60S subunit biogenesis factor ZNF622 (477 aa).

Residue alanine 2 is modified to N-acetylalanine. 2 U1-type zinc fingers span residues 4–28 (YTCITCRVAFRDADMQRAHYKTDWH) and 67–91 (TYCTVCSKKFASFNAYENHLKSRRH). The interval 135-212 (AIKAQPSMSP…EDLDGDDWED (78 aa)) is disordered. The span at 167-178 (GTHDRDPSEKPP) shows a compositional bias: basic and acidic residues. Acidic residues predominate over residues 196–212 (EDSEEEEEDLDGDDWED). At serine 276 the chain carries Phosphoserine.

The protein belongs to the REI1 family. Homo- and heterodimer. Associates with pre-60S ribosomal particles. Interacts with MELK and MYBL2. Interacts with DNAJC21. In terms of processing, phosphorylated by MELK. The phosphorylation may redirect the protein to the nucleus. Post-translationally, ubiquitinated by HECTD1, leading to its degradation. Expressed in lung, kidney, spleen, liver and brain with lowest expression in kidney.

It localises to the cytoplasm. Its subcellular location is the nucleus. Pre-60S-associated cytoplasmic factor involved in the cytoplasmic maturation of the 60S subunit. This Homo sapiens (Human) protein is Cytoplasmic 60S subunit biogenesis factor ZNF622.